Reading from the N-terminus, the 255-residue chain is Menaquinol:cytochrome c reductase cytochrome c subunit (255 aa).

Helical transmembrane passes span 46–62 (WMVG…LTIV), 104–124 (VVGA…APFL), and 137–157 (VAVG…WQSV). The Cytochrome c domain maps to 178–253 (DTNAEGYKVF…ELAKFISETT (76 aa)). Heme c is bound by residues C192, C195, and H196.

The protein belongs to the cytochrome b family. The main subunits of the menaquinol:cytochrome c complex are a Rieske-type iron-sulfur protein (QcrA), a cytochrome b (QcrB) and a cytochrome c (QcrC). Heme c serves as cofactor.

The protein resides in the cell membrane. Its function is as follows. Component of the menaquinol:cytochrome c reductase complex. This chain is Menaquinol:cytochrome c reductase cytochrome c subunit (qcrC), found in Bacillus subtilis (strain 168).